Here is an 85-residue protein sequence, read N- to C-terminus: Large ribosomal subunit protein bL31B (85 aa).

The protein belongs to the bacterial ribosomal protein bL31 family. Type B subfamily. In terms of assembly, part of the 50S ribosomal subunit.

In Pseudarthrobacter chlorophenolicus (strain ATCC 700700 / DSM 12829 / CIP 107037 / JCM 12360 / KCTC 9906 / NCIMB 13794 / A6) (Arthrobacter chlorophenolicus), this protein is Large ribosomal subunit protein bL31B.